We begin with the raw amino-acid sequence, 381 residues long: Subtilisin NAT (381 aa).

A signal peptide spans 1–29 (MRSKKLWISLLFALTLIFTMAFSNMSAQA). The propeptide occupies 30-106 (AGKSSTEKKY…VEEDHIAHEY (77 aa)). An Inhibitor I9 domain is found at 38–103 (KYIVGFKQTM…VAYVEEDHIA (66 aa)). Positions 111–380 (PYGISQIKAP…KGLINVQAAA (270 aa)) constitute a Peptidase S8 domain. The Charge relay system role is filled by Asp-138. Residue Asp-147 coordinates Ca(2+). His-170 acts as the Charge relay system in catalysis. Residues Leu-181, Asn-183, Ile-185, Val-187, Ala-275, Tyr-277, Thr-280, and Asp-303 each contribute to the Ca(2+) site. Residue Ser-327 is the Charge relay system of the active site.

It belongs to the peptidase S8 family. Monomer. Ca(2+) serves as cofactor.

It is found in the secreted. It catalyses the reaction Hydrolysis of proteins with broad specificity for peptide bonds, and a preference for a large uncharged residue in P1. Hydrolyzes peptide amides.. Inhibited by PMSF (phenylmethylsulfonyl fluoride). Its function is as follows. Subtilisin is an extracellular alkaline serine protease, it catalyzes the hydrolysis of proteins and peptide amides. Subtilisin NAT also has fibrinolytic activity. The sequence is that of Subtilisin NAT from Bacillus subtilis subsp. natto.